Here is an 84-residue protein sequence, read N- to C-terminus: Cell division topological specificity factor (84 aa).

Belongs to the MinE family.

In terms of biological role, prevents the cell division inhibition by proteins MinC and MinD at internal division sites while permitting inhibition at polar sites. This ensures cell division at the proper site by restricting the formation of a division septum at the midpoint of the long axis of the cell. This Hydrogenovibrio crunogenus (strain DSM 25203 / XCL-2) (Thiomicrospira crunogena) protein is Cell division topological specificity factor.